The sequence spans 402 residues: Renin (402 aa).

A signal peptide spans 1-26 (MGGRRMPLWALLLLWTSCSFSLPTDT). Residues 27–64 (ASFGRILLKKMPSVREILEERGVDMTRISAEWGEFIKK) constitute a propeptide, activation peptide. A glycan (N-linked (GlcNAc...) asparagine) is linked at Asn-69. Residues 84 to 399 (YYGEIGIGTP…DRHNNRIGFA (316 aa)) form the Peptidase A1 domain. Asp-102 is an active-site residue. Cys-115 and Cys-122 are disulfide-bonded. A glycan (N-linked (GlcNAc...) asparagine) is linked at Asn-139. The cysteines at positions 278 and 282 are disulfide-linked. Residue Asp-287 is part of the active site. Residue Asn-320 is glycosylated (N-linked (GlcNAc...) asparagine). A disulfide bridge connects residues Cys-321 and Cys-358.

It belongs to the peptidase A1 family. Interacts with ATP6AP2.

The protein localises to the secreted. It localises to the membrane. It carries out the reaction Cleavage of Leu-|-Xaa bond in angiotensinogen to generate angiotensin I.. Interaction with ATP6AP2 results in a 5-fold increased efficiency in angiotensinogen processing. In terms of biological role, renin is a highly specific endopeptidase, whose only known function is to generate angiotensin I from angiotensinogen in the plasma, initiating a cascade of reactions that produce an elevation of blood pressure and increased sodium retention by the kidney. The sequence is that of Renin (Ren1) from Rattus norvegicus (Rat).